The primary structure comprises 555 residues: Trehalase (555 aa).

An N-terminal signal peptide occupies residues 1-16 (MIPFLLMVAFADTVLQ). A glycan (N-linked (GlcNAc...) asparagine) is linked at asparagine 46. Residues arginine 164, 171-172 (WD), and asparagine 208 each bind substrate. A glycan (N-linked (GlcNAc...) asparagine) is linked at asparagine 216. Residues 217-219 (RSQ), 282-284 (RPE), and glycine 316 contribute to the substrate site. The active-site Proton donor/acceptor is aspartate 318. N-linked (GlcNAc...) asparagine glycans are attached at residues asparagine 334 and asparagine 371. The active-site Proton donor/acceptor is glutamate 516. Residue glutamate 531 participates in substrate binding.

The protein belongs to the glycosyl hydrolase 37 family. In terms of tissue distribution, bean-shaped accessory glands (bags).

The protein resides in the secreted. The enzyme catalyses alpha,alpha-trehalose + H2O = alpha-D-glucose + beta-D-glucose. This Tenebrio molitor (Yellow mealworm beetle) protein is Trehalase.